Reading from the N-terminus, the 264-residue chain is MSQKKAPLFEIRSGTVDALLLSPRTADMDALAAELTRRFADTPEFFSNDVIAIDVRRLAEDERLPIDRLVETLTALRARAIGVVASPEQAGWAQAFGLPLLDSHGRRPRGGNDAKDADRNDAQDAQGAPEHAQAAEAPASTSAIPPADAAAMQPGTMIVDRPLRSGQRIYARGDLVVLDLVSDGAEVIAEGNIYVYASLRGRALAGVKGNLDARIFCTCLEPQLISIAGIYRTGETPWPDAYASKPAQVRLADNTLVFEPLRMK.

Residues 103–147 (SHGRRPRGGNDAKDADRNDAQDAQGAPEHAQAAEAPASTSAIPPA) form a disordered region. Over residues 110–122 (GGNDAKDADRNDA) the composition is skewed to basic and acidic residues. Residues 124-147 (DAQGAPEHAQAAEAPASTSAIPPA) are compositionally biased toward low complexity.

It belongs to the MinC family. Interacts with MinD and FtsZ.

Functionally, cell division inhibitor that blocks the formation of polar Z ring septums. Rapidly oscillates between the poles of the cell to destabilize FtsZ filaments that have formed before they mature into polar Z rings. Prevents FtsZ polymerization. In Ralstonia pickettii (strain 12J), this protein is Probable septum site-determining protein MinC.